Reading from the N-terminus, the 253-residue chain is Indole-3-glycerol phosphate synthase (253 aa).

It belongs to the TrpC family.

It carries out the reaction 1-(2-carboxyphenylamino)-1-deoxy-D-ribulose 5-phosphate + H(+) = (1S,2R)-1-C-(indol-3-yl)glycerol 3-phosphate + CO2 + H2O. Its pathway is amino-acid biosynthesis; L-tryptophan biosynthesis; L-tryptophan from chorismate: step 4/5. The protein is Indole-3-glycerol phosphate synthase of Bacillus cereus (strain ZK / E33L).